The primary structure comprises 806 residues: Zygotic DNA replication licensing factor mcm3 (806 aa).

The 208-residue stretch at 295–502 (VFEQLSRSLA…HDREISDHVL (208 aa)) folds into the MCM domain. 345 to 352 (GDPSVAKS) serves as a coordination point for ATP. The Arginine finger motif lies at 477–480 (SRFD). Residues 662-738 (KKRRRREGES…TDSSAKPGLS (77 aa)) form a disordered region. Residues 693 to 702 (AQDGESHDPY) show a composition bias toward basic and acidic residues.

It belongs to the MCM family. In terms of assembly, component of the mcm2-7 complex (RLF-M). The complex forms a toroidal hexameric ring with the proposed subunit order mcm2-mcm6-mcm4-mcm7-mcm3-mcm5. Begins to associate with zmcm6 into mcm complexes at the neurula stage. Component of the CMG helicase complex, composed of the mcm2-7 complex, the GINS complex and cdc45.

The protein resides in the nucleus. It localises to the chromosome. It catalyses the reaction ATP + H2O = ADP + phosphate + H(+). Functionally, acts as a component of the mcm2-7 complex (mcm complex) which is the putative replicative helicase essential for 'once per cell cycle' DNA replication initiation and elongation in eukaryotic cells. The active ATPase sites in the mcm2-7 ring are formed through the interaction surfaces of two neighboring subunits such that a critical structure of a conserved arginine finger motif is provided in trans relative to the ATP-binding site of the Walker A box of the adjacent subunit. The six ATPase active sites, however, are likely to contribute differentially to the complex helicase activity. The existence of maternal and zygotic forms of mcm3 and mcm6 suggests that specific forms of mcm2-7 complexes may be used during different stages of development. This Xenopus laevis (African clawed frog) protein is Zygotic DNA replication licensing factor mcm3.